The chain runs to 436 residues: Phosphatidylinositol transfer protein CSR1 (436 aa).

Positions 85–104 (VYDAEKVEDSDAEKEKPTPQ) are disordered. A compositionally biased stretch (basic and acidic residues) spans 86–102 (YDAEKVEDSDAEKEKPT). One can recognise a CRAL-TRIO domain in the interval 188–347 (KKGIVKQLEL…ELGGKDEYNF (160 aa)).

This sequence belongs to the PITP family. Binds phosphatidylinositol (PtdIns).

The protein localises to the cytoplasm. It is found in the endosome. In terms of biological role, non-classical phosphatidylinositol (PtdIns) transfer protein (PITP), which exhibits PtdIns-binding/transfer activity in the absence of detectable PtdCho-binding/transfer activity. May also regulate post-Golgi membrane-trafficking events and have a role resistance to oxidative stress. The sequence is that of Phosphatidylinositol transfer protein CSR1 (CSR1) from Eremothecium gossypii (strain ATCC 10895 / CBS 109.51 / FGSC 9923 / NRRL Y-1056) (Yeast).